The sequence spans 112 residues: Gastrula zinc finger protein XlCGF16.1 (112 aa).

C2H2-type zinc fingers lie at residues 6–28 (YNCS…QKTH), 34–56 (FVCF…QRIH), 62–84 (FSCT…HKTH), and 90–112 (FLCF…HRTH).

The protein belongs to the krueppel C2H2-type zinc-finger protein family.

The protein localises to the nucleus. Functionally, may be involved in transcriptional regulation. This chain is Gastrula zinc finger protein XlCGF16.1, found in Xenopus laevis (African clawed frog).